The chain runs to 340 residues: Glyceraldehyde-3-phosphate dehydrogenase (340 aa).

Residues 11–12 (SI) and Gly111 contribute to the NAD(+) site. Residue 140-142 (SCN) coordinates D-glyceraldehyde 3-phosphate. Residue Cys141 is the Nucleophile of the active site. An NAD(+)-binding site is contributed by Arg169. 195-196 (HG) provides a ligand contact to D-glyceraldehyde 3-phosphate. Gln303 is an NAD(+) binding site.

This sequence belongs to the glyceraldehyde-3-phosphate dehydrogenase family. Homotetramer.

It is found in the cytoplasm. It catalyses the reaction D-glyceraldehyde 3-phosphate + phosphate + NADP(+) = (2R)-3-phospho-glyceroyl phosphate + NADPH + H(+). It carries out the reaction D-glyceraldehyde 3-phosphate + phosphate + NAD(+) = (2R)-3-phospho-glyceroyl phosphate + NADH + H(+). It functions in the pathway carbohydrate degradation; glycolysis; pyruvate from D-glyceraldehyde 3-phosphate: step 1/5. This chain is Glyceraldehyde-3-phosphate dehydrogenase, found in Methanococcus vannielii (strain ATCC 35089 / DSM 1224 / JCM 13029 / OCM 148 / SB).